A 336-amino-acid polypeptide reads, in one-letter code: 3-isopropylmalate dehydrogenase (336 aa).

Substrate contacts are provided by Arg-87, Arg-97, Arg-121, and Asp-211. Mg(2+) is bound by residues Asp-211, Asp-235, and Asp-239. 271-283 (GSAPDIAGQGIAD) is an NAD(+) binding site.

This sequence belongs to the isocitrate and isopropylmalate dehydrogenases family. LeuB type 2 subfamily. As to quaternary structure, homodimer. The cofactor is Mg(2+). Requires Mn(2+) as cofactor.

It is found in the cytoplasm. The enzyme catalyses (2R,3S)-3-isopropylmalate + NAD(+) = 4-methyl-2-oxopentanoate + CO2 + NADH. The protein operates within amino-acid biosynthesis; L-leucine biosynthesis; L-leucine from 3-methyl-2-oxobutanoate: step 3/4. Catalyzes the oxidation of 3-carboxy-2-hydroxy-4-methylpentanoate (3-isopropylmalate) to 3-carboxy-4-methyl-2-oxopentanoate. The product decarboxylates to 4-methyl-2 oxopentanoate. In Mycobacterium tuberculosis (strain CDC 1551 / Oshkosh), this protein is 3-isopropylmalate dehydrogenase (leuB).